The sequence spans 371 residues: MRPIEKFFTENAPDSDLVIEKVIEFGIDFLGGEWKNVKKNEVKVTTILGGQSNHMFHVTSSTSATPYLLRIHRQGPSHVFMDTVNFAIFSERGLGPKLYGFFDGGRMEEFLPSRTLDSDCILDPEISRRVGAVYPKYHAIDVPVSKKRRCFQVMRESLKEYQDLGGGDYEIKPTTVTYSEHPKKISMDDLYKEIDFMEKWTNELFEDTVVFCHNDLASSNILELNSTKELVLIDWEFGSYNCRGFDLAMHLAETAADFRDSTPPGIRISEELTDNPPNLQGFCEAYVDADNKLKNRVPSNRDLEVSNLICECQFFWPITQLFWACFVMKLALLKYNCGVDMDVQAQDRFAVYWHLKERTRKIYEDLKKGTC.

It belongs to the choline/ethanolamine kinase family. It depends on Mg(2+) as a cofactor.

The catalysed reaction is choline + ATP = phosphocholine + ADP + H(+). This is Choline kinase B1 (ckb-1) from Caenorhabditis elegans.